The following is a 685-amino-acid chain: Potassium-transporting ATPase ATP-binding subunit (685 aa).

4 consecutive transmembrane segments (helical) span residues 36-56, 68-88, 218-238, and 255-275; these read MFVVEVGFFVTILLTIFPSIF, LIVTIILFITVLFANFAESVA, IALNTILVSLTLIFLIVLVAL, and IALLVCLIPTTIGGLLSAIGI. The 4-aspartylphosphate intermediate role is filled by Asp306. ATP is bound by residues Asp343, Glu347, 375–382, and Lys394; that span reads FTAQTRMS. Mg(2+) is bound by residues Asp517 and Asp521. Transmembrane regions (helical) follow at residues 587–607, 615–635, and 654–674; these read FAIIPAIFTIAIPKMQLMNIM, AILSALIFNAIIIPALIPIAM, and IVFGFGGIIVPFVGIKIIDMI.

This sequence belongs to the cation transport ATPase (P-type) (TC 3.A.3) family. Type IA subfamily. As to quaternary structure, the system is composed of three essential subunits: KdpA, KdpB and KdpC.

It is found in the cell membrane. It catalyses the reaction K(+)(out) + ATP + H2O = K(+)(in) + ADP + phosphate + H(+). Its function is as follows. Part of the high-affinity ATP-driven potassium transport (or Kdp) system, which catalyzes the hydrolysis of ATP coupled with the electrogenic transport of potassium into the cytoplasm. This subunit is responsible for energy coupling to the transport system and for the release of the potassium ions to the cytoplasm. The polypeptide is Potassium-transporting ATPase ATP-binding subunit (Clostridium acetobutylicum (strain ATCC 824 / DSM 792 / JCM 1419 / IAM 19013 / LMG 5710 / NBRC 13948 / NRRL B-527 / VKM B-1787 / 2291 / W)).